A 488-amino-acid polypeptide reads, in one-letter code: ATP synthase subunit beta (488 aa).

Position 164–171 (164–171 (GGAGMGKT)) interacts with ATP.

It belongs to the ATPase alpha/beta chains family. As to quaternary structure, F-type ATPases have 2 components, CF(1) - the catalytic core - and CF(0) - the membrane proton channel. CF(1) has five subunits: alpha(3), beta(3), gamma(1), delta(1), epsilon(1). CF(0) has four main subunits: a(1), b(1), b'(1) and c(9-12).

It localises to the cellular thylakoid membrane. The enzyme catalyses ATP + H2O + 4 H(+)(in) = ADP + phosphate + 5 H(+)(out). Produces ATP from ADP in the presence of a proton gradient across the membrane. The catalytic sites are hosted primarily by the beta subunits. This Synechococcus sp. (strain RCC307) protein is ATP synthase subunit beta.